The primary structure comprises 290 residues: Porphobilinogen deaminase (290 aa).

Cys-237 is subject to S-(dipyrrolylmethanemethyl)cysteine.

Belongs to the HMBS family. In terms of assembly, monomer. Requires dipyrromethane as cofactor.

It catalyses the reaction 4 porphobilinogen + H2O = hydroxymethylbilane + 4 NH4(+). It participates in porphyrin-containing compound metabolism; protoporphyrin-IX biosynthesis; coproporphyrinogen-III from 5-aminolevulinate: step 2/4. In terms of biological role, tetrapolymerization of the monopyrrole PBG into the hydroxymethylbilane pre-uroporphyrinogen in several discrete steps. In Clostridium botulinum (strain ATCC 19397 / Type A), this protein is Porphobilinogen deaminase.